The primary structure comprises 112 residues: Putative pterin-4-alpha-carbinolamine dehydratase (112 aa).

Belongs to the pterin-4-alpha-carbinolamine dehydratase family.

The catalysed reaction is (4aS,6R)-4a-hydroxy-L-erythro-5,6,7,8-tetrahydrobiopterin = (6R)-L-erythro-6,7-dihydrobiopterin + H2O. This chain is Putative pterin-4-alpha-carbinolamine dehydratase, found in Shewanella halifaxensis (strain HAW-EB4).